A 260-amino-acid polypeptide reads, in one-letter code: Thiazole synthase (260 aa).

The active-site Schiff-base intermediate with DXP is K96. 1-deoxy-D-xylulose 5-phosphate-binding positions include G157, 183 to 184 (AG), and 205 to 206 (AS).

It belongs to the ThiG family. Homotetramer. Forms heterodimers with either ThiH or ThiS.

It is found in the cytoplasm. It carries out the reaction [ThiS sulfur-carrier protein]-C-terminal-Gly-aminoethanethioate + 2-iminoacetate + 1-deoxy-D-xylulose 5-phosphate = [ThiS sulfur-carrier protein]-C-terminal Gly-Gly + 2-[(2R,5Z)-2-carboxy-4-methylthiazol-5(2H)-ylidene]ethyl phosphate + 2 H2O + H(+). Its pathway is cofactor biosynthesis; thiamine diphosphate biosynthesis. Catalyzes the rearrangement of 1-deoxy-D-xylulose 5-phosphate (DXP) to produce the thiazole phosphate moiety of thiamine. Sulfur is provided by the thiocarboxylate moiety of the carrier protein ThiS. In vitro, sulfur can be provided by H(2)S. In Corynebacterium glutamicum (strain R), this protein is Thiazole synthase.